The following is an 823-amino-acid chain: MFYVIGGITVSVVAFFFTIKFLFELAARVVSFLQNEDRERRGDRTIYDYVRGNYLDPRSCKVSWDWKDPYEVGHSMAFRVHLFYKNGQPFPAHRPVGLRVHISHVELAVEIPVTQEVLQEPNSNVVKVAFTVRKAGRYEITVKLGGLNVAYSPYYKIFQPGMVVPSKTKIVCHFSTLVLTCGQPHTLQIVPRDEYDNPTNNSMSLRDEHNYTLSIHELGPQEEESTGVSFEKSVTSNRQTFQVFLRLTLHSRGCFHACISYQNQPINNGEFDIIVLSEDEKNIVERNVSTSGVSIYFEAYLYNATNCSSTPWHLPPMHMTSSQRRPSTAVDEEDEDSPSECHTPEKVKKPKKVYCYVSPKQFSVKEFYLKIIPWRLYTFRVCPGTKFSYLGPDPVHKLLTLVVDDGIQPPVELSCKERNILAATFIRSLHKNIGGSETFQDKVNFFQRELRQVHMKRPHSKVTLKVSRHALLESSLKATRNFSISDWSKNFEVVFQDEEALDWGGPRREWFELICKALFDTTNQLFTRFSDNNQALVHPNPNRPAHLRLKMYEFAGRLVGKCLYESSLGGAYKQLVRARFTRSFLAQIIGLRMHYKYFETDDPEFYKSKVCFILNNDMSEMELVFAEEKYNKSGQLDKVVELMTGGAQTPVTNANKIFYLNLLAQYRLASQVKEEVEHFLKGLNELVPENLLAIFDENELELLMCGTGDISVSDFKAHAVVVGGSWHFREKVMRWFWTVVSSLTQEELARLLQFTTGSSQLPPGGFAALCPSFQIIAAPTHSTLPTAHTCFNQLCLPTYDSYEEVHRMLQLAISEGCEGFGML.

The Filamin repeat unit spans residues G52–F158. The segment at P315–E345 is disordered. Residues S483–T789 are interaction with SOCS2. The region spanning S483–L823 is the HECT domain. C790 (glycyl thioester intermediate) is an active-site residue.

As to quaternary structure, interacts with SOCS2. Interacts (via HECT domain) with HTRA2, DIABLO/SMAC and SEPTIN4; in the cytoplasm following induction of apoptosis. Post-translationally, autoubiquitinated in vitro in the presence of E2 enzyme UBE2D1/UBCH5A.

The enzyme catalyses S-ubiquitinyl-[E2 ubiquitin-conjugating enzyme]-L-cysteine + [acceptor protein]-L-lysine = [E2 ubiquitin-conjugating enzyme]-L-cysteine + N(6)-ubiquitinyl-[acceptor protein]-L-lysine.. It participates in protein modification; protein ubiquitination. Functionally, E3 ubiquitin-protein ligase that catalyzes 'Lys-11'- or 'Lys-33'-linked polyubiquitin chains, with some preference for 'Lys-33' linkages. E3 ubiquitin-protein ligases accept ubiquitin from an E2 ubiquitin-conjugating enzyme in the form of a thioester and then directly transfers the ubiquitin to targeted substrates. Ubiquitinates SEPTIN4, DIABLO/SMAC and HTRA2 in vitro. Modulates pulmonary inflammation by targeting SOCS2 for ubiquitination and subsequent degradation by the proteasome. The protein is Apoptosis-resistant E3 ubiquitin protein ligase 1 of Homo sapiens (Human).